The sequence spans 124 residues: Ribonuclease pancreatic (124 aa).

Residues 1-13 (KESAAAKFERQHM) show a composition bias toward basic and acidic residues. The interval 1–24 (KESAAAKFERQHMDSSTSSASSSN) is disordered. Lysine 7 and arginine 10 together coordinate substrate. Histidine 12 (proton acceptor) is an active-site residue. 4 disulfides stabilise this stretch: cysteine 26/cysteine 84, cysteine 40/cysteine 95, cysteine 58/cysteine 110, and cysteine 65/cysteine 72. Asparagine 34 carries N-linked (GlcNAc...) asparagine; partial glycosylation. Substrate-binding positions include 41-45 (KPVNT), lysine 66, and arginine 85. Histidine 119 serves as the catalytic Proton donor.

The protein belongs to the pancreatic ribonuclease family. Monomer. Interacts with and forms tight 1:1 complexes with RNH1. Dimerization of two such complexes may occur. Interaction with RNH1 inhibits this protein. As to expression, pancreas.

The protein localises to the secreted. The catalysed reaction is an [RNA] containing cytidine + H2O = an [RNA]-3'-cytidine-3'-phosphate + a 5'-hydroxy-ribonucleotide-3'-[RNA].. It catalyses the reaction an [RNA] containing uridine + H2O = an [RNA]-3'-uridine-3'-phosphate + a 5'-hydroxy-ribonucleotide-3'-[RNA].. Functionally, endonuclease that catalyzes the cleavage of RNA on the 3' side of pyrimidine nucleotides. Acts on single-stranded and double-stranded RNA. The chain is Ribonuclease pancreatic (RNASE1) from Aepyceros melampus (Impala).